Consider the following 129-residue polypeptide: Glycine cleavage system H protein (129 aa).

The 83-residue stretch at 24–106 (LLKIGVSEFA…IGEGWLVILK (83 aa)) folds into the Lipoyl-binding domain. An N6-lipoyllysine modification is found at lysine 65.

It belongs to the GcvH family. In terms of assembly, the glycine cleavage system is composed of four proteins: P, T, L and H. (R)-lipoate serves as cofactor.

In terms of biological role, the glycine cleavage system catalyzes the degradation of glycine. The H protein shuttles the methylamine group of glycine from the P protein to the T protein. This chain is Glycine cleavage system H protein, found in Prochlorococcus marinus (strain MIT 9312).